A 508-amino-acid polypeptide reads, in one-letter code: ATP synthase subunit alpha (508 aa).

ATP is bound at residue 169-176 (GDRGTGKS).

This sequence belongs to the ATPase alpha/beta chains family. In terms of assembly, F-type ATPases have 2 components, CF(1) - the catalytic core - and CF(0) - the membrane proton channel. CF(1) has five subunits: alpha(3), beta(3), gamma(1), delta(1), epsilon(1). CF(0) has three main subunits: a(1), b(2) and c(9-12). The alpha and beta chains form an alternating ring which encloses part of the gamma chain. CF(1) is attached to CF(0) by a central stalk formed by the gamma and epsilon chains, while a peripheral stalk is formed by the delta and b chains.

The protein resides in the cell membrane. The enzyme catalyses ATP + H2O + 4 H(+)(in) = ADP + phosphate + 5 H(+)(out). Its function is as follows. Produces ATP from ADP in the presence of a proton gradient across the membrane. The alpha chain is a regulatory subunit. The sequence is that of ATP synthase subunit alpha from Natranaerobius thermophilus (strain ATCC BAA-1301 / DSM 18059 / JW/NM-WN-LF).